The primary structure comprises 377 residues: Guanine nucleotide-binding protein subunit beta (377 aa).

WD repeat units lie at residues 63-93, 105-135, 154-185, 202-233, 246-276, 293-323, and 339-369; these read GHTG…IVWN, LPCA…SIFN, GHKG…VLWD, GHTA…RLWD, CHEG…RLFD, GDIP…YVWD, and SHEG…KIWA.

Belongs to the WD repeat G protein beta family. As to quaternary structure, g proteins are composed of 3 units, alpha, beta and gamma.

The protein localises to the cell membrane. It localises to the endoplasmic reticulum membrane. Guanine nucleotide-binding proteins (G proteins) are involved as a modulator or transducer in various transmembrane signaling systems. The beta and gamma chains are required for the GTPase activity, for replacement of GDP by GTP, and for G protein-effector interaction. This Nicotiana plumbaginifolia (Leadwort-leaved tobacco) protein is Guanine nucleotide-binding protein subunit beta.